The primary structure comprises 752 residues: Multifunctional tryptophan biosynthesis protein (752 aa).

In terms of domain architecture, Glutamine amidotransferase type-1 spans F3 to G202. Residue G58–G60 coordinates L-glutamine. C86 functions as the Nucleophile; for GATase activity in the catalytic mechanism. S136–L137 is an L-glutamine binding site. Residues H176 and E178 each act as for GATase activity in the active site. The indole-3-glycerol phosphate synthase stretch occupies residues I231–I495. The N-(5'-phosphoribosyl)anthranilate isomerase stretch occupies residues L509–G752.

The catalysed reaction is N-(5-phospho-beta-D-ribosyl)anthranilate = 1-(2-carboxyphenylamino)-1-deoxy-D-ribulose 5-phosphate. It carries out the reaction 1-(2-carboxyphenylamino)-1-deoxy-D-ribulose 5-phosphate + H(+) = (1S,2R)-1-C-(indol-3-yl)glycerol 3-phosphate + CO2 + H2O. It catalyses the reaction chorismate + L-glutamine = anthranilate + pyruvate + L-glutamate + H(+). It participates in amino-acid biosynthesis; L-tryptophan biosynthesis; L-tryptophan from chorismate: step 1/5. Its pathway is amino-acid biosynthesis; L-tryptophan biosynthesis; L-tryptophan from chorismate: step 3/5. It functions in the pathway amino-acid biosynthesis; L-tryptophan biosynthesis; L-tryptophan from chorismate: step 4/5. Functionally, trifunctional enzyme bearing the Gln amidotransferase (GATase) domain of anthranilate synthase, indole-glycerolphosphate synthase, and phosphoribosylanthranilate isomerase activities. This Cryptococcus neoformans var. neoformans serotype D (strain JEC21 / ATCC MYA-565) (Filobasidiella neoformans) protein is Multifunctional tryptophan biosynthesis protein (TRP1).